Reading from the N-terminus, the 816-residue chain is Phenylalanine--tRNA ligase beta subunit (816 aa).

The 109-residue stretch at 40–148 folds into the tRNA-binding domain; it reads FEELAALKTG…EGMAHGQRFI (109 aa). The 79-residue stretch at 401 to 479 folds into the B5 domain; sequence KAVEVQRFSI…RIYGYDNVPT (79 aa). Positions 457, 463, 466, and 467 each coordinate Mg(2+). The FDX-ACB domain maps to 721–814; sequence PVYPAVKRDI…LTDRFGGSFR (94 aa).

Belongs to the phenylalanyl-tRNA synthetase beta subunit family. Type 1 subfamily. In terms of assembly, tetramer of two alpha and two beta subunits. It depends on Mg(2+) as a cofactor.

Its subcellular location is the cytoplasm. It catalyses the reaction tRNA(Phe) + L-phenylalanine + ATP = L-phenylalanyl-tRNA(Phe) + AMP + diphosphate + H(+). The polypeptide is Phenylalanine--tRNA ligase beta subunit (Desulfotalea psychrophila (strain LSv54 / DSM 12343)).